Reading from the N-terminus, the 161-residue chain is Allophycocyanin beta chain (161 aa).

At Asn71 the chain carries N4-methylasparagine. Cys81 contributes to the (2R,3E)-phycocyanobilin binding site.

The protein belongs to the phycobiliprotein family. Heterodimer of an alpha and a beta chain. In terms of processing, contains one covalently linked phycocyanobilin chromophore.

Its subcellular location is the plastid. It is found in the chloroplast thylakoid membrane. In terms of biological role, light-harvesting photosynthetic bile pigment-protein from the phycobiliprotein complex. Allophycocyanin has a maximum absorption at approximately 650 nanometers. This is Allophycocyanin beta chain (apcB) from Pyropia haitanensis (Red seaweed).